Here is a 120-residue protein sequence, read N- to C-terminus: Large ribosomal subunit protein bL12 (120 aa).

The protein belongs to the bacterial ribosomal protein bL12 family. Homodimer. Part of the ribosomal stalk of the 50S ribosomal subunit. Forms a multimeric L10(L12)X complex, where L10 forms an elongated spine to which 2 to 4 L12 dimers bind in a sequential fashion. Binds GTP-bound translation factors.

In terms of biological role, forms part of the ribosomal stalk which helps the ribosome interact with GTP-bound translation factors. Is thus essential for accurate translation. This Listeria monocytogenes serotype 4b (strain CLIP80459) protein is Large ribosomal subunit protein bL12.